A 209-amino-acid polypeptide reads, in one-letter code: Fibroblast growth factor 10 (209 aa).

The first 36 residues, 1 to 36, serve as a signal peptide directing secretion; the sequence is MWKWILTHCASAFPHLPGCCCCFLLLFLVSSFPVTC. Residues asparagine 50 and asparagine 197 are each glycosylated (N-linked (GlcNAc...) asparagine).

This sequence belongs to the heparin-binding growth factors family. As to quaternary structure, interacts with FGFR1 and FGFR2. Interacts with FGFBP1. As to expression, expressed abundantly in embryos and the lung, and at much lower levels in brain and heart.

The protein resides in the secreted. Plays an important role in the regulation of embryonic development, cell proliferation and cell differentiation. Required for normal branching morphogenesis. May play a role in wound healing. The protein is Fibroblast growth factor 10 (Fgf10) of Mus musculus (Mouse).